The following is a 679-amino-acid chain: Methionine--tRNA ligase (679 aa).

The short motif at 15-25 (PYANGSIHLGH) is the 'HIGH' region element. Zn(2+) is bound by residues Cys146, Cys149, Cys159, and Cys162. Positions 332 to 336 (KMSKS) match the 'KMSKS' region motif. Lys335 is an ATP binding site. The region spanning 577–679 (DFAKVDMRVA…AGALPGMPVK (103 aa)) is the tRNA-binding domain.

The protein belongs to the class-I aminoacyl-tRNA synthetase family. MetG type 1 subfamily. As to quaternary structure, homodimer. It depends on Zn(2+) as a cofactor.

The protein localises to the cytoplasm. It carries out the reaction tRNA(Met) + L-methionine + ATP = L-methionyl-tRNA(Met) + AMP + diphosphate. Its function is as follows. Is required not only for elongation of protein synthesis but also for the initiation of all mRNA translation through initiator tRNA(fMet) aminoacylation. The sequence is that of Methionine--tRNA ligase from Sodalis glossinidius (strain morsitans).